The chain runs to 587 residues: Aspartate--tRNA ligase (587 aa).

Glu-174 serves as a coordination point for L-aspartate. Positions 198–201 (QITK) are aspartate. Arg-220 is a binding site for L-aspartate. ATP contacts are provided by residues 220–222 (RDE) and Gln-229. His-443 is an L-aspartate binding site. An ATP-binding site is contributed by Glu-477. Position 484 (Arg-484) interacts with L-aspartate. 529–532 (GLDR) provides a ligand contact to ATP.

Belongs to the class-II aminoacyl-tRNA synthetase family. Type 1 subfamily. In terms of assembly, homodimer.

It localises to the cytoplasm. It carries out the reaction tRNA(Asp) + L-aspartate + ATP = L-aspartyl-tRNA(Asp) + AMP + diphosphate. Functionally, catalyzes the attachment of L-aspartate to tRNA(Asp) in a two-step reaction: L-aspartate is first activated by ATP to form Asp-AMP and then transferred to the acceptor end of tRNA(Asp). This is Aspartate--tRNA ligase from Streptococcus pneumoniae serotype 19F (strain G54).